We begin with the raw amino-acid sequence, 72 residues long: Conotoxin Ep11.1 (72 aa).

Residues 1-19 form the signal peptide; that stretch reads MKLCVTFLLILVILPSVTG. A propeptide spanning residues 20–32 is cleaved from the precursor; sequence EKSSKRTLSGAAL. 4 disulfides stabilise this stretch: Cys39–Cys53, Cys46–Cys58, Cys52–Cys63, and Cys57–Cys70.

Belongs to the conotoxin I1 superfamily. As to expression, expressed by the venom duct.

It localises to the secreted. In Conus episcopatus (Bishop's cone), this protein is Conotoxin Ep11.1.